Consider the following 687-residue polypeptide: Follicle-stimulating hormone receptor (687 aa).

An N-terminal signal peptide occupies residues 1–17; the sequence is MALLLVSLLAFLSLGSG. Residues 18 to 46 enclose the LRRNT domain; that stretch reads CHHQVCHYSNRVFLCQESKVTEIPSDLPR. Residues 18–358 are Extracellular-facing; that stretch reads CHHQVCHYSN…EDIMGYDILR (341 aa). Cysteines 23 and 32 form a disulfide. LRR repeat units follow at residues 49 to 72, 73 to 97, 98 to 118, 119 to 143, 144 to 169, 170 to 192, 193 to 216, 217 to 240, and 241 to 259; these read LELR…FGDL, KKIE…LPKL, HEIR…AFQN, LPNL…KIQS, LQKV…MGLS, FESM…AFNG, TQLD…VFQG, ASGP…GLEN, and LKKL…PSLE. Asn-191 and Asn-199 each carry an N-linked (GlcNAc...) asparagine glycan. 4 disulfide bridges follow: Cys-275-Cys-338, Cys-276-Cys-292, Cys-276-Cys-348, and Cys-292-Cys-330. N-linked (GlcNAc...) asparagine glycosylation is present at Asn-293. A Sulfotyrosine modification is found at Tyr-327. A helical transmembrane segment spans residues 359–379; that stretch reads VLIWFISILAITGNIIVLVIL. Over 380–390 the chain is Cytoplasmic; the sequence is ITSQYKLTVPR. Residues 391–413 form a helical membrane-spanning segment; it reads FLMCNLAFADLCIGIYLLLIASV. Residues 414 to 435 are Extracellular-facing; that stretch reads DIHTKSQYHNYAIDWQTGAGCD. Residues Cys-434 and Cys-509 are joined by a disulfide bond. A helical membrane pass occupies residues 436-457; that stretch reads AAGFFTVFGSELSVYTLTAITL. Residues 458 to 477 are Cytoplasmic-facing; sequence ERWHTITHAMQLECKVQLRH. Residues 478–500 form a helical membrane-spanning segment; that stretch reads AASVMLVGWIFGFGVGLLPIFGI. The Extracellular portion of the chain corresponds to 501–520; it reads STYMKVSICLPMDIDSPLSQ. The helical transmembrane segment at 521–542 threads the bilayer; sequence LYVMSLLVLNVLAFVVICGCYT. At 543 to 565 the chain is on the cytoplasmic side; sequence HIYLTVRNPNIVSSSSDTKIAKR. A helical transmembrane segment spans residues 566–589; sequence MGILIFTDFLCMAPISFFGISASL. Topologically, residues 590-600 are extracellular; it reads KVALITVSKSK. The helical transmembrane segment at 601-622 threads the bilayer; that stretch reads ILLVLFYPINSCANPFLYAIFT. Residues 623–687 lie on the Cytoplasmic side of the membrane; it reads KNFRRDFFIL…LVPLSHLAQN (65 aa).

Belongs to the G-protein coupled receptor 1 family. FSH/LSH/TSH subfamily. Homotrimer. Functions as a homotrimer binding the FSH hormone heterodimer composed of CGA and FSHB. Interacts with ARRB2. Interacts with APPL2; interaction is independent of follicle stimulating hormone stimulation. In terms of processing, N-glycosylated; indirectly required for FSH-binding, possibly via a conformational change that allows high affinity binding of hormone. Post-translationally, sulfated.

The protein resides in the cell membrane. G protein-coupled receptor for follitropin, the follicle-stimulating hormone. Through cAMP production activates the downstream PI3K-AKT and ERK1/ERK2 signaling pathways. This Equus asinus (Donkey) protein is Follicle-stimulating hormone receptor (FSHR).